The chain runs to 157 residues: uncharacterized protein (157 aa).

Positions Met-1 to Ala-26 are cleaved as a signal peptide.

It is found in the secreted. This is an uncharacterized protein from Homo sapiens (Human).